Reading from the N-terminus, the 68-residue chain is Large ribosomal subunit protein uL29 (68 aa).

This sequence belongs to the universal ribosomal protein uL29 family.

This chain is Large ribosomal subunit protein uL29, found in Nitrobacter winogradskyi (strain ATCC 25391 / DSM 10237 / CIP 104748 / NCIMB 11846 / Nb-255).